We begin with the raw amino-acid sequence, 89 residues long: Small ribosomal subunit protein uS15 (89 aa).

Belongs to the universal ribosomal protein uS15 family. As to quaternary structure, part of the 30S ribosomal subunit. Forms a bridge to the 50S subunit in the 70S ribosome, contacting the 23S rRNA.

In terms of biological role, one of the primary rRNA binding proteins, it binds directly to 16S rRNA where it helps nucleate assembly of the platform of the 30S subunit by binding and bridging several RNA helices of the 16S rRNA. Its function is as follows. Forms an intersubunit bridge (bridge B4) with the 23S rRNA of the 50S subunit in the ribosome. This chain is Small ribosomal subunit protein uS15, found in Mannheimia succiniciproducens (strain KCTC 0769BP / MBEL55E).